The primary structure comprises 317 residues: Protoheme IX farnesyltransferase (317 aa).

Helical transmembrane passes span 33–53 (VMSL…GEIN), 54–74 (PILG…SGAL), 117–137 (VILG…TIFF), 154–174 (IVIG…CVTG), 181–201 (VILF…LALF), 242–262 (FFTG…SAIF), and 285–305 (MFAY…ADHF).

It belongs to the UbiA prenyltransferase family. Protoheme IX farnesyltransferase subfamily.

The protein resides in the cell inner membrane. The catalysed reaction is heme b + (2E,6E)-farnesyl diphosphate + H2O = Fe(II)-heme o + diphosphate. The protein operates within porphyrin-containing compound metabolism; heme O biosynthesis; heme O from protoheme: step 1/1. Functionally, converts heme B (protoheme IX) to heme O by substitution of the vinyl group on carbon 2 of heme B porphyrin ring with a hydroxyethyl farnesyl side group. This is Protoheme IX farnesyltransferase from Agrobacterium fabrum (strain C58 / ATCC 33970) (Agrobacterium tumefaciens (strain C58)).